Here is a 597-residue protein sequence, read N- to C-terminus: Fructan 1-exohydrolase (597 aa).

The signal sequence occupies residues methionine 1–glycine 15. Aspartate 76 is an active-site residue. N-linked (GlcNAc...) asparagine glycans are attached at residues asparagine 169, asparagine 237, and asparagine 249. A disulfide bridge links cysteine 447 with cysteine 493. Asparagine 568 is a glycosylation site (N-linked (GlcNAc...) asparagine).

It belongs to the glycosyl hydrolase 32 family.

The enzyme catalyses Hydrolysis of terminal, non-reducing (2-&gt;1)-linked beta-D-fructofuranose residues in fructans.. Its activity is regulated as follows. Inhibited by sucrose. Functionally, hydrolyzes inulin-type beta-(2,1)-fructans. May play a role as a beta-(2,1)-trimmer during graminan biosynthesis. In Triticum urartu (Red wild einkorn), this protein is Fructan 1-exohydrolase.